The following is a 469-amino-acid chain: MSPQTETKASVGFKAGVKDYKLNYYTPDYETKDTDILAAFRVTPQPGVPPEEAGAAVAAESSTGTWTTVWTDGLTSLDRYKGRCYHIEPVAGEENQYIPYVAYPLDLFEEGSVTNMFTSIVGNVFGFKALRALRLEDLRIPPAYSKTFQGPPHGIQVERDKLNKYGRPLLGCTIKPKLGLSAKNYGRAVYECLRGGLDFTKDDENVNSQPFMRWRDRFLFCAEALYKAQAETGEIKGHYLNATAGTCEEMMKRAVFARELGVPIVMHDYLTGGFTANTSLAHYCRDNGLLLHIHRAMHAVIDRQKNHGMHFRVLAKALRMSGGDHVHAGTVVGKLEGERDITLGFVDLLRDDFIEKDRSRGIYFTQDWVSLPGVLPVASGGIHVWHMPALTEIFGDDSVLQFGGGTLGHPWGNAPGAVANRVALEACVQARNEGRDLAREGNEIIREASKWSPELAAACEVWKEIKFEF.

Positions 1–2 are excised as a propeptide; the sequence is MS. Residue Pro3 is modified to N-acetylproline. Residue Lys14 is modified to N6,N6,N6-trimethyllysine. Positions 123 and 173 each coordinate substrate. The Proton acceptor role is filled by Lys175. Lys177 provides a ligand contact to substrate. Residues Lys201, Asp203, and Glu204 each coordinate Mg(2+). Residue Lys201 is modified to N6-carboxylysine. Catalysis depends on His294, which acts as the Proton acceptor. Substrate-binding residues include Arg295, His327, and Ser379.

Belongs to the RuBisCO large chain family. Type I subfamily. Heterohexadecamer of 8 large chains and 8 small chains; disulfide-linked. The disulfide link is formed within the large subunit homodimers. Mg(2+) is required as a cofactor. The disulfide bond which can form in the large chain dimeric partners within the hexadecamer appears to be associated with oxidative stress and protein turnover.

It localises to the plastid. The protein localises to the chloroplast. The enzyme catalyses 2 (2R)-3-phosphoglycerate + 2 H(+) = D-ribulose 1,5-bisphosphate + CO2 + H2O. The catalysed reaction is D-ribulose 1,5-bisphosphate + O2 = 2-phosphoglycolate + (2R)-3-phosphoglycerate + 2 H(+). In terms of biological role, ruBisCO catalyzes two reactions: the carboxylation of D-ribulose 1,5-bisphosphate, the primary event in carbon dioxide fixation, as well as the oxidative fragmentation of the pentose substrate in the photorespiration process. Both reactions occur simultaneously and in competition at the same active site. This is Ribulose bisphosphate carboxylase large chain from Brexia madagascariensis.